Reading from the N-terminus, the 65-residue chain is Prokaryotic ubiquitin-like protein Pup (65 aa).

Positions 1–13 are enriched in basic and acidic residues; the sequence is MAQEQKQPRKSSE. Residues 1 to 34 form a disordered region; that stretch reads MAQEQKQPRKSSEADEAVEAVAETDVSERKEALD. An ARC ATPase binding region spans residues 21–59; sequence VAETDVSERKEALDSDVDDILDEIDDVLETNAEDFVKSF. Residues 25-49 adopt a coiled-coil conformation; sequence DVSERKEALDSDVDDILDEIDDVLE. An Isoglutamyl lysine isopeptide (Glu-Lys) (interchain with K-? in acceptor proteins) cross-link involves residue Glu65.

Belongs to the prokaryotic ubiquitin-like protein family. In terms of assembly, strongly interacts with the proteasome-associated ATPase ARC through a hydrophobic interface; the interacting region of Pup lies in its C-terminal half. There is one Pup binding site per ARC hexamer ring.

Its pathway is protein degradation; proteasomal Pup-dependent pathway. In terms of biological role, protein modifier that is covalently attached to lysine residues of substrate proteins, thereby targeting them for proteasomal degradation. The tagging system is termed pupylation. The protein is Prokaryotic ubiquitin-like protein Pup of Nocardioides sp. (strain ATCC BAA-499 / JS614).